A 364-amino-acid polypeptide reads, in one-letter code: NAD(P)H-quinone oxidoreductase subunit 1, chloroplastic (364 aa).

The next 6 helical transmembrane spans lie at 27 to 47, 98 to 118, 127 to 147, 255 to 275, 301 to 321, and 337 to 357; these read IWLLVPIFTPVSGILIGVLVI, FSVGPSIAVISILLSYSVIPF, ISIGVFLWIAISSIAPIGLLM, GLFYVASYLNLLVSSLFVTVL, VFGSTIGILITLAKAYLFLFV, and LLNLGWKFLLPIALGNLLLTT.

Belongs to the complex I subunit 1 family. As to quaternary structure, NDH is composed of at least 16 different subunits, 5 of which are encoded in the nucleus.

The protein resides in the plastid. It localises to the chloroplast thylakoid membrane. It catalyses the reaction a plastoquinone + NADH + (n+1) H(+)(in) = a plastoquinol + NAD(+) + n H(+)(out). It carries out the reaction a plastoquinone + NADPH + (n+1) H(+)(in) = a plastoquinol + NADP(+) + n H(+)(out). In terms of biological role, NDH shuttles electrons from NAD(P)H:plastoquinone, via FMN and iron-sulfur (Fe-S) centers, to quinones in the photosynthetic chain and possibly in a chloroplast respiratory chain. The immediate electron acceptor for the enzyme in this species is believed to be plastoquinone. Couples the redox reaction to proton translocation, and thus conserves the redox energy in a proton gradient. In Illicium oligandrum (Star anise), this protein is NAD(P)H-quinone oxidoreductase subunit 1, chloroplastic.